Here is a 694-residue protein sequence, read N- to C-terminus: Cyclic nucleotide-gated ion channel 4 (694 aa).

Over residues 1–15 the composition is skewed to basic and acidic residues; that stretch reads MATEQEFTRASRFSR. Positions 1–64 are disordered; that stretch reads MATEQEFTRA…RIGLTCGGRR (64 aa). Topologically, residues 1–92 are cytoplasmic; it reads MATEQEFTRA…RSKWVREWNK (92 aa). Positions 24–53 are enriched in acidic residues; it reads SEEDNTEEEDEEEEEMEEIEEEEEEEEEED. The chain crosses the membrane as a helical span at residues 93–113; it reads VFLLVCATGLFVDPLFLYTLS. At 114 to 126 the chain is on the extracellular side; sequence VSDTCMCLLVDGW. A helical transmembrane segment spans residues 127–147; sequence LALTVTALRSMTDLLHLWNIW. At 148 to 187 the chain is on the cytoplasmic side; that stretch reads IQFKIARRWPYPGGDSDGDTNKGGGTRGSTRVAPPYVKKN. A helical membrane pass occupies residues 188–208; it reads GFFFDLFVILPLPQVVLWVVI. At 209–216 the chain is on the extracellular side; sequence PSLLKRGS. A helical transmembrane segment spans residues 217 to 237; it reads VTLVVSVLLVTFLFQYLPKIY. The Cytoplasmic segment spans residues 238–251; sequence HSIRHLRRNATLSG. A helical membrane pass occupies residues 252-272; it reads YIFGTVWWGIALNMIAYFVAA. The Extracellular portion of the chain corresponds to 273 to 392; the sequence is HAAGACWYLL…LESTTEWSEV (120 aa). A helical transmembrane segment spans residues 393–413; it reads VFNIIVLTSGLLLVTMLIGNI. The Cytoplasmic portion of the chain corresponds to 414–694; sequence KVFLHATTSK…KPNPDDFDDY (281 aa). A nucleoside 3',5'-cyclic phosphate is bound by residues 496–626 and Asp-565; that span reads LFQH…ARYY. The tract at residues 610 to 626 is calmodulin-binding; sequence FRYTFVNEKVKRSARYY. One can recognise an IQ domain in the interval 631 to 660; it reads RTWAAVAVQLAWRRYKHRLTLTSLSFIRPR.

Belongs to the cyclic nucleotide-gated cation channel (TC 1.A.1.5) family. Homotetramer or heterotetramer.

It is found in the cell membrane. Acts as a cyclic nucleotide-gated ion channel. Permeable to potassium and sodium in a cyclic nucleotide-dependent fashion (cAMP or cGMP). Might constitute a common downstream component of the signaling pathways leading to hypersensitive response (HR). This Arabidopsis thaliana (Mouse-ear cress) protein is Cyclic nucleotide-gated ion channel 4 (CNGC4).